Reading from the N-terminus, the 103-residue chain is V-type sodium ATPase subunit G (103 aa).

The protein belongs to the V-ATPase F subunit family.

Its function is as follows. Involved in ATP-driven sodium extrusion. The polypeptide is V-type sodium ATPase subunit G (ntpG) (Enterococcus hirae (strain ATCC 9790 / DSM 20160 / JCM 8729 / LMG 6399 / NBRC 3181 / NCIMB 6459 / NCDO 1258 / NCTC 12367 / WDCM 00089 / R)).